We begin with the raw amino-acid sequence, 648 residues long: Transketolase (648 aa).

Histidine 22 serves as a coordination point for substrate. Residues histidine 62 and 109–111 (GPL) contribute to the thiamine diphosphate site. Aspartate 150 lines the Mg(2+) pocket. Thiamine diphosphate is bound by residues glycine 151 and asparagine 180. Mg(2+)-binding residues include asparagine 180 and valine 182. Histidine 252, arginine 345, and serine 372 together coordinate substrate. Histidine 252 is a thiamine diphosphate binding site. Catalysis depends on glutamate 397, which acts as the Proton donor. A thiamine diphosphate-binding site is contributed by phenylalanine 423. Residues histidine 447, aspartate 455, and arginine 506 each coordinate substrate.

Belongs to the transketolase family. Homodimer. Requires Mg(2+) as cofactor. The cofactor is Ca(2+). Mn(2+) is required as a cofactor. It depends on Co(2+) as a cofactor. Thiamine diphosphate serves as cofactor.

The catalysed reaction is D-sedoheptulose 7-phosphate + D-glyceraldehyde 3-phosphate = aldehydo-D-ribose 5-phosphate + D-xylulose 5-phosphate. Catalyzes the transfer of a two-carbon ketol group from a ketose donor to an aldose acceptor, via a covalent intermediate with the cofactor thiamine pyrophosphate. The sequence is that of Transketolase (tkt) from Mycoplasma pneumoniae (strain ATCC 29342 / M129 / Subtype 1) (Mycoplasmoides pneumoniae).